A 145-amino-acid polypeptide reads, in one-letter code: DNA polymerase epsilon subunit 3 (145 aa).

A2 is modified (N-acetylalanine). Phosphothreonine is present on T83. The stretch at 85 to 144 (LKEALEAYRREQKGKKEASEQKKKDKDKKDCEEQDKSREEEDEDEERLDEEEQNEEEEVD) forms a coiled coil. Positions 93–123 (RREQKGKKEASEQKKKDKDKKDCEEQDKSRE) are enriched in basic and acidic residues. The segment at 93-145 (RREQKGKKEASEQKKKDKDKKDCEEQDKSREEEDEDEERLDEEEQNEEEEVDN) is disordered. S121 is subject to Phosphoserine. The span at 124–145 (EEDEDEERLDEEEQNEEEEVDN) shows a compositional bias: acidic residues.

As to quaternary structure, component of the DNA polymerase epsilon complex consisting of four subunits: the catalytic subunit POLE and the accessory subunits POLE2, POLE3 and POLE4. Interaction with POLE4 is a prerequisite for further binding with POLE and POLE2. Heterodimer with CHRAC1; binds to DNA. Component of the CHRAC ISWI chromatin remodeling complex at least composed of SMARCA5/SNF2H, BAZ1A/ACF1, CHRAC1 and POLE3; the complex preferentially binds DNA through the CHRAC1-POLE3 heterodimer and possesses ATP-dependent nucleosome-remodeling activity. Within the complex, the heterodimer with CHRAC1 interacts with SMARCA5/SNF2H; the interaction is direct and enhances nucleosome sliding activity by the SMARCA5/SNF2H and BAZ1A/ACF1 interaction. Within the complex, the heterodimer with CHRAC1 interacts with BAZ1A/ACF1; the interactions are direct.

The protein localises to the nucleus. In terms of biological role, accessory component of the DNA polymerase epsilon complex. Participates in DNA repair and in chromosomal DNA replication. Forms a complex with CHRAC1 and binds naked DNA, which is then incorporated into chromatin, aided by the nucleosome-remodeling activity of ISWI/SNF2H and ACF1. Does not enhance nucleosome sliding activity of the ACF-5 ISWI chromatin remodeling complex. This chain is DNA polymerase epsilon subunit 3 (Pole3), found in Rattus norvegicus (Rat).